Reading from the N-terminus, the 28-residue chain is Phospholipase A2 3 (28 aa).

This sequence belongs to the phospholipase A2 family. Group I subfamily. Ca(2+) serves as cofactor. As to expression, expressed by the venom gland.

The protein resides in the secreted. The enzyme catalyses a 1,2-diacyl-sn-glycero-3-phosphocholine + H2O = a 1-acyl-sn-glycero-3-phosphocholine + a fatty acid + H(+). Its function is as follows. Snake venom phospholipase A2 (PLA2) that inhibits neuromuscular transmission by blocking acetylcholine release from the nerve termini. PLA2 catalyzes the calcium-dependent hydrolysis of the 2-acyl groups in 3-sn-phosphoglycerides. The sequence is that of Phospholipase A2 3 from Micrurus nigrocinctus (Central American coral snake).